A 142-amino-acid polypeptide reads, in one-letter code: VSLTDEEIRLIQHIWSNVNVVEITAKALERVFYVYPWTTRLFTSFNHNFKASDKQVHDHAVNVSNAISAAIGDLHDINKNFSALSTKHQKKLGVDTSNFMLLGQAFLVELAALEKDKFTPQYHKAALKLFEVVTEALSCQYH.

Residues 2 to 142 (SLTDEEIRLI…VTEALSCQYH (141 aa)) form the Globin domain. Heme b-binding residues include H59 and H88.

It belongs to the globin family. As to quaternary structure, heterotetramer of two alpha chains and two beta chains. As to expression, red blood cells.

Functionally, involved in oxygen transport from the lung to the various peripheral tissues. The polypeptide is Hemoglobin subunit beta-1 (HBB1) (Torpedo marmorata (Marbled electric ray)).